We begin with the raw amino-acid sequence, 272 residues long: Acyl-[acyl-carrier-protein]--UDP-N-acetylglucosamine O-acyltransferase (272 aa).

Belongs to the transferase hexapeptide repeat family. LpxA subfamily. Homotrimer.

The protein resides in the cytoplasm. It catalyses the reaction a (3R)-hydroxyacyl-[ACP] + UDP-N-acetyl-alpha-D-glucosamine = a UDP-3-O-[(3R)-3-hydroxyacyl]-N-acetyl-alpha-D-glucosamine + holo-[ACP]. It functions in the pathway glycolipid biosynthesis; lipid IV(A) biosynthesis; lipid IV(A) from (3R)-3-hydroxytetradecanoyl-[acyl-carrier-protein] and UDP-N-acetyl-alpha-D-glucosamine: step 1/6. In terms of biological role, involved in the biosynthesis of lipid A, a phosphorylated glycolipid that anchors the lipopolysaccharide to the outer membrane of the cell. In Rhizobium etli (strain ATCC 51251 / DSM 11541 / JCM 21823 / NBRC 15573 / CFN 42), this protein is Acyl-[acyl-carrier-protein]--UDP-N-acetylglucosamine O-acyltransferase.